A 93-amino-acid polypeptide reads, in one-letter code: Small ribosomal subunit protein uS19c (93 aa).

This sequence belongs to the universal ribosomal protein uS19 family.

The protein resides in the plastid. Its subcellular location is the chloroplast. Protein S19 forms a complex with S13 that binds strongly to the 16S ribosomal RNA. This is Small ribosomal subunit protein uS19c from Oryza nivara (Indian wild rice).